An 899-amino-acid polypeptide reads, in one-letter code: Lipoxygenase 2, chloroplastic (899 aa).

The transit peptide at 1 to 57 (MLKPQIHKPHLVNKLPLGTPFIPSHASIASFSTTSLRTLSVQKCYRRYIRYTSSNIK) directs the protein to the chloroplast. Residues 83–203 (ALTAVTVGLL…DNPDKRIFFL (121 aa)) enclose the PLAT domain. Residues 206 to 899 (SYLPSETPEG…GKGVPYSISI (694 aa)) form the Lipoxygenase domain. The tract at residues 252–286 (DPDTDSDMARPVLGGNEHPFPRRCRTGRKMTSTEP) is disordered. Residues H557, H562, H749, N753, and I899 each coordinate Fe cation.

This sequence belongs to the lipoxygenase family. It depends on Fe cation as a cofactor. As to expression, confined to glandular trichomes in flowers.

Its subcellular location is the plastid. It is found in the chloroplast. The protein operates within lipid metabolism; oxylipin biosynthesis. Its function is as follows. Plant lipoxygenases may be involved in a number of diverse aspects of plant physiology including growth and development, pest resistance, and senescence or responses to wounding. Catalyzes the hydroperoxidation of lipids containing a cis,cis-1,4-pentadiene structure. The protein is Lipoxygenase 2, chloroplastic of Tanacetum cinerariifolium (Dalmatian daisy).